The sequence spans 274 residues: S-adenosylmethionine-dependent nucleotide dehydratase (274 aa).

The 215-residue stretch at 1–215 (MAYKVNLHIT…VERHAEVSHD (215 aa)) folds into the Radical SAM core domain. [4Fe-4S] cluster contacts are provided by cysteine 13, cysteine 17, and cysteine 20.

The protein belongs to the radical SAM superfamily. Prokaryotic viperin family. Requires [4Fe-4S] cluster as cofactor.

It carries out the reaction CTP + AH2 + S-adenosyl-L-methionine = 3'-deoxy-3',4'-didehydro-CTP + 5'-deoxyadenosine + L-methionine + A + H2O + H(+). Expression of pVip6 in E.coli (strain MG1655) confers resistance to phages lambda, P1, SECphi6, SECphi8 and T7. Catalyzes the conversion of cytidine triphosphate (CTP) to 3'-deoxy-3',4'-didehydro-CTP (ddhCTP), probably via a SAM-dependent radical mechanism. The modified nucleotide represses transcription from T7 RNA polymerase-directed genes (possibly by acting as chain terminators), strongly suggesting these nucleotides block viral polymerase transcription. The chain is S-adenosylmethionine-dependent nucleotide dehydratase from Selenomonas ruminantium.